The chain runs to 283 residues: Non-selective voltage-gated ion channel VDAC3 (283 aa).

The residue at position 2 (Cys-2) is an N-acetylcysteine. Position 4 is a phosphothreonine (Thr-4). N6-acetyllysine is present on residues Lys-12, Lys-15, and Lys-20. 2 consecutive transmembrane segments (beta stranded) span residues Met-26 to Ser-35 and Val-39 to Ala-47. Lys-53 participates in a covalent cross-link: Glycyl lysine isopeptide (Lys-Gly) (interchain with G-Cter in ubiquitin). The next 3 beta stranded transmembrane spans lie at Ala-54–Ile-64, Leu-69–Asn-76, and Thr-80–Asn-89. Lys-90 carries the N6-acetyllysine modification. The chain crosses the membrane as a beta stranded span at residues Leu-95–Val-104. Residues Lys-109 and Lys-110 each participate in a glycyl lysine isopeptide (Lys-Gly) (interchain with G-Cter in ubiquitin) cross-link. Beta stranded transmembrane passes span Ser-111–Arg-120, Phe-123–Asp-130, Thr-137–Ala-145, Leu-150–Asp-158, Lys-163–Ala-175, Phe-178–Asn-185, Glu-189–Val-198, Ile-202–Thr-211, Arg-218–Leu-227, and Thr-231–Asn-238. Ser-241 carries the post-translational modification Phosphoserine. Residues Leu-242 to Gly-244 and Ser-260 to Asp-264 contribute to the NAD(+) site. The next 2 membrane-spanning stretches (beta stranded) occupy residues Leu-242 to Leu-251 and Gly-254 to Ile-263. The residue at position 266 (Lys-266) is an N6-acetyllysine; alternate. Residue Lys-266 forms a Glycyl lysine isopeptide (Lys-Gly) (interchain with G-Cter in ubiquitin); alternate linkage. A beta stranded membrane pass occupies residues His-273–Glu-282.

Belongs to the eukaryotic mitochondrial porin family. Interacts with ARMC12 in a TBC1D21-dependent manner. Interacts with MISFA. Post-translationally, ubiquitinated by PRKN during mitophagy, leading to its degradation and enhancement of mitophagy. Deubiquitinated by USP30.

Its subcellular location is the mitochondrion outer membrane. It localises to the membrane. It carries out the reaction chloride(in) = chloride(out). The enzyme catalyses K(+)(in) = K(+)(out). Non-selective voltage-gated ion channel that mediates the transport of anions and cations through the mitochondrion outer membrane and plasma membrane. Forms a high-conducting channel with a stable open state and a voltage-induced closure with a mild preference for anions over cations. Involved in male fertility and sperm mitochondrial sheath formation. This is Non-selective voltage-gated ion channel VDAC3 from Sus scrofa (Pig).